The following is a 441-amino-acid chain: tRNA (guanine(37)-N(1))-methyltransferase (441 aa).

The transit peptide at 1–9 (MFAPPAARA) directs the protein to the mitochondrion. S-adenosyl-L-methionine contacts are provided by residues Arg221, 248-249 (DL), 276-277 (DG), and Asn331.

The protein belongs to the class I-like SAM-binding methyltransferase superfamily. TRM5/TYW2 family. Monomer.

The protein localises to the mitochondrion matrix. Its subcellular location is the nucleus. It is found in the cytoplasm. The catalysed reaction is guanosine(37) in tRNA + S-adenosyl-L-methionine = N(1)-methylguanosine(37) in tRNA + S-adenosyl-L-homocysteine + H(+). Functionally, specifically methylates the N1 position of guanosine-37 in various cytoplasmic and mitochondrial tRNAs. Methylation is not dependent on the nature of the nucleoside 5' of the target nucleoside. This is the first step in the biosynthesis of wybutosine (yW), a modified base adjacent to the anticodon of tRNAs and required for accurate decoding. This Phaeosphaeria nodorum (strain SN15 / ATCC MYA-4574 / FGSC 10173) (Glume blotch fungus) protein is tRNA (guanine(37)-N(1))-methyltransferase.